Here is a 158-residue protein sequence, read N- to C-terminus: 3-hydroxyacyl-[acyl-carrier-protein] dehydratase FabZ (158 aa).

The active site involves His-61.

The protein belongs to the thioester dehydratase family. FabZ subfamily.

It is found in the cytoplasm. It catalyses the reaction a (3R)-hydroxyacyl-[ACP] = a (2E)-enoyl-[ACP] + H2O. Functionally, involved in unsaturated fatty acids biosynthesis. Catalyzes the dehydration of short chain beta-hydroxyacyl-ACPs and long chain saturated and unsaturated beta-hydroxyacyl-ACPs. The polypeptide is 3-hydroxyacyl-[acyl-carrier-protein] dehydratase FabZ (Methylobacterium radiotolerans (strain ATCC 27329 / DSM 1819 / JCM 2831 / NBRC 15690 / NCIMB 10815 / 0-1)).